A 580-amino-acid chain; its full sequence is 2-succinyl-5-enolpyruvyl-6-hydroxy-3-cyclohexene-1-carboxylate synthase (580 aa).

Belongs to the TPP enzyme family. MenD subfamily. In terms of assembly, homodimer. It depends on Mg(2+) as a cofactor. Requires Mn(2+) as cofactor. The cofactor is thiamine diphosphate.

It catalyses the reaction isochorismate + 2-oxoglutarate + H(+) = 5-enolpyruvoyl-6-hydroxy-2-succinyl-cyclohex-3-ene-1-carboxylate + CO2. The protein operates within quinol/quinone metabolism; 1,4-dihydroxy-2-naphthoate biosynthesis; 1,4-dihydroxy-2-naphthoate from chorismate: step 2/7. It participates in quinol/quinone metabolism; menaquinone biosynthesis. Its function is as follows. Catalyzes the thiamine diphosphate-dependent decarboxylation of 2-oxoglutarate and the subsequent addition of the resulting succinic semialdehyde-thiamine pyrophosphate anion to isochorismate to yield 2-succinyl-5-enolpyruvyl-6-hydroxy-3-cyclohexene-1-carboxylate (SEPHCHC). This chain is 2-succinyl-5-enolpyruvyl-6-hydroxy-3-cyclohexene-1-carboxylate synthase, found in Listeria welshimeri serovar 6b (strain ATCC 35897 / DSM 20650 / CCUG 15529 / CIP 8149 / NCTC 11857 / SLCC 5334 / V8).